The primary structure comprises 713 residues: Bifunctional protein gal10 (713 aa).

The segment at Met-1 to Ile-350 is galactowaldenase. Tyr-7–Leu-38 provides a ligand contact to NAD(+). Positions Asp-351–Tyr-713 are mutarotase. The active-site For mutarotase activity is the His-532.

The protein in the N-terminal section; belongs to the NAD(P)-dependent epimerase/dehydratase family. This sequence in the C-terminal section; belongs to the aldose epimerase family. It depends on NAD(+) as a cofactor.

The enzyme catalyses UDP-alpha-D-glucose = UDP-alpha-D-galactose. It carries out the reaction alpha-D-glucose = beta-D-glucose. The protein operates within carbohydrate metabolism; galactose metabolism. It functions in the pathway carbohydrate metabolism; hexose metabolism. Functionally, mutarotase converts alpha-aldose to the beta-anomer. It is active on D-glucose, L-arabinose, D-xylose, D-galactose, maltose and lactose. In Schizosaccharomyces pombe (strain 972 / ATCC 24843) (Fission yeast), this protein is Bifunctional protein gal10 (gal10).